The chain runs to 355 residues: DNA polymerase IV (355 aa).

In terms of domain architecture, UmuC spans 7-188; that stretch reads IIHIDMDCFY…LPVRKLFGVG (182 aa). Positions 11 and 106 each coordinate Mg(2+). Glu107 is an active-site residue.

The protein belongs to the DNA polymerase type-Y family. In terms of assembly, monomer. Requires Mg(2+) as cofactor.

The protein localises to the cytoplasm. It catalyses the reaction DNA(n) + a 2'-deoxyribonucleoside 5'-triphosphate = DNA(n+1) + diphosphate. Poorly processive, error-prone DNA polymerase involved in untargeted mutagenesis. Copies undamaged DNA at stalled replication forks, which arise in vivo from mismatched or misaligned primer ends. These misaligned primers can be extended by PolIV. Exhibits no 3'-5' exonuclease (proofreading) activity. May be involved in translesional synthesis, in conjunction with the beta clamp from PolIII. In Legionella pneumophila (strain Lens), this protein is DNA polymerase IV.